The primary structure comprises 239 residues: 1-(5-phosphoribosyl)-5-[(5-phosphoribosylamino)methylideneamino] imidazole-4-carboxamide isomerase (239 aa).

Aspartate 8 serves as the catalytic Proton acceptor. Aspartate 129 serves as the catalytic Proton donor.

The protein belongs to the HisA/HisF family.

It localises to the cytoplasm. The enzyme catalyses 1-(5-phospho-beta-D-ribosyl)-5-[(5-phospho-beta-D-ribosylamino)methylideneamino]imidazole-4-carboxamide = 5-[(5-phospho-1-deoxy-D-ribulos-1-ylimino)methylamino]-1-(5-phospho-beta-D-ribosyl)imidazole-4-carboxamide. The protein operates within amino-acid biosynthesis; L-histidine biosynthesis; L-histidine from 5-phospho-alpha-D-ribose 1-diphosphate: step 4/9. The polypeptide is 1-(5-phosphoribosyl)-5-[(5-phosphoribosylamino)methylideneamino] imidazole-4-carboxamide isomerase (Bacillus cereus (strain ZK / E33L)).